The chain runs to 236 residues: Putative glutamine amidotransferase-like protein YvdE (236 aa).

One can recognise a Glutamine amidotransferase type-1 domain in the interval 17 to 236 (SPFWWNKVSY…IFEIFANGTI (220 aa)).

This chain is Putative glutamine amidotransferase-like protein YvdE (yvdE), found in Lactococcus lactis subsp. lactis (strain IL1403) (Streptococcus lactis).